Consider the following 336-residue polypeptide: Mediator of RNA polymerase II transcription subunit 4 (336 aa).

Disordered regions lie at residues 1–45 (MNST…SNVV) and 59–85 (NVEE…QDEA). Positions 154–192 (QQAAQTIAALERVSEGLDDKIRDMIRKLAECRRELRNYQ) form a coiled coil. The disordered stretch occupies residues 281–336 (PVANGVAQNHNNGYAMERRLSTGYGSDNDGDTNMNGRSGLAGLDIFDDDDDDDDDD). Over residues 325-336 (IFDDDDDDDDDD) the composition is skewed to acidic residues.

This sequence belongs to the Mediator complex subunit 4 family. In terms of assembly, component of the Mediator complex.

Its subcellular location is the nucleus. In terms of biological role, component of the Mediator complex, a coactivator involved in the regulated transcription of nearly all RNA polymerase II-dependent genes. Mediator functions as a bridge to convey information from gene-specific regulatory proteins to the basal RNA polymerase II transcription machinery. Mediator is recruited to promoters by direct interactions with regulatory proteins and serves as a scaffold for the assembly of a functional preinitiation complex with RNA polymerase II and the general transcription factors. In Yarrowia lipolytica (strain CLIB 122 / E 150) (Yeast), this protein is Mediator of RNA polymerase II transcription subunit 4 (MED4).